The chain runs to 621 residues: MSPVFPMLTVLTMFYYMCLRRRARTATRGDMMNSHRTIVSNSRTSPLNAEVVQYAKEVVDFSSHYGSENSMSYTMWNLAGVPNVFPSSGDFTQTAVFRTYGTWWDQCPSASLPFRRTPSSFQSQDYVELTFEQQVYPTAVHVLETYHPGAVIRILACSANPYSPNPPAEVRWEILWSERPMKVNASQARQFKPCIKQINFPTNLIRLEVNSSLLDYYTELDAVVLHGTKDKPLLSLKTALVDMNDLEDDDYEEKDGCEMDALNKKFSSAALGDGPHNGYFDKLPYELIQLILNHLSLPDLCRLAQTCRLLHQHCCDPLQYIHLNLQPYWARLDDTSLEFLQARCVLVQWLNLSWTGNRGFISVSGFSRFLKVCGSELVRLELSCSHFLNDTCLEVISEMCPNLQDLNLSSCDKLPPQAFGHIAKLCSLKRLVLYRTKVEQTALLSILNFCAELQHLSLGSCVMIEDYDVIASMIGAKCKNLRTLDLWRCKNITENGIAELASGCVLLEELDLGWCPTLQSSTGCFVRLARQLPNLQKLFLTANRSVCDTDIEELASNCTRLQQLDILGTRMVSPASLRKLLESCKDLSLLDVSFCSQIDNKAVLELNASFPKVFIKKSFTQ.

At Arg-28 the chain carries Asymmetric dimethylarginine. The region spanning 277-332 is the F-box domain; the sequence is NGYFDKLPYELIQLILNHLSLPDLCRLAQTCRLLHQHCCDPLQYIHLNLQPYWARL. LRR repeat units lie at residues 376–397, 402–421, 427–448, 452–474, 480–501, 504–524, 532–558, 559–583, and 584–609; these read ELVR…EVIS, NLQD…AFGH, SLKR…SILN, ELQH…ASMI, NLRT…AELA, CVLL…STGC, LPNL…ASNC, TRLQ…LLES, and CKDL…LNAS.

As to quaternary structure, part of a SCF (SKP1-CUL1-F-box) protein ligase complex. Interacts with FAF2 and VCP. Interacts with PPTC7; this interaction promotes destruction of BNIP3 and NIX and mitophagy suppression.

Its subcellular location is the cytoplasm. It localises to the nucleus. The protein localises to the mitochondrion outer membrane. Functionally, substrate-recognition component of the mitochondria-localized SCF-FBXL4 ubiquitin E3 ligase complex that plays a role in the restriction of mitophagy by controlling the degradation of BNIP3 and NIX mitophagy receptors. Also rescues mitochondrial injury through reverting hyperactivation of DRP1-mediated mitochondrial fission. The sequence is that of F-box/LRR-repeat protein 4 (Fbxl4) from Mus musculus (Mouse).